The primary structure comprises 244 residues: DNA repair protein RecO (244 aa).

It belongs to the RecO family.

In terms of biological role, involved in DNA repair and RecF pathway recombination. The protein is DNA repair protein RecO of Polynucleobacter necessarius subsp. necessarius (strain STIR1).